The following is a 341-amino-acid chain: 4-amino-5-hydroxymethyl-2-methylpyrimidine phosphate synthase (341 aa).

Lys-62 carries the N6-(pyridoxal phosphate)lysine modification. The active site involves His-66. Position 115–118 (115–118 (GEFG)) interacts with pyridoxal 5'-phosphate. The CCCFC; essential for catalytic activity, may be the site of iron coordination motif lies at 195 to 199 (CCCFC).

The protein belongs to the NMT1/THI5 family. Homodimer. It depends on Fe cation as a cofactor.

The catalysed reaction is N(6)-(pyridoxal phosphate)-L-lysyl-[4-amino-5-hydroxymethyl-2-methylpyrimidine phosphate synthase] + L-histidyl-[4-amino-5-hydroxymethyl-2-methylpyrimidine phosphate synthase] + 2 Fe(3+) + 4 H2O = L-lysyl-[4-amino-5-hydroxymethyl-2-methylpyrimidine phosphate synthase] + (2S)-2-amino-5-hydroxy-4-oxopentanoyl-[4-amino-5-hydroxymethyl-2-methylpyrimidine phosphate synthase] + 4-amino-2-methyl-5-(phosphooxymethyl)pyrimidine + 3-oxopropanoate + 2 Fe(2+) + 2 H(+). The protein operates within cofactor biosynthesis; thiamine diphosphate biosynthesis. Functionally, responsible for the formation of the pyrimidine heterocycle in the thiamine biosynthesis pathway. Catalyzes the formation of hydroxymethylpyrimidine phosphate (HMP-P) from histidine and pyridoxal phosphate (PLP). The protein uses PLP and the active site histidine to form HMP-P, generating an inactive enzyme. The enzyme can only undergo a single turnover, which suggests it is a suicide enzyme. The sequence is that of 4-amino-5-hydroxymethyl-2-methylpyrimidine phosphate synthase from Uromyces fabae (Rust fungus).